The sequence spans 519 residues: Cytochrome P450 monooxygenase apdE (519 aa).

Residues 27 to 47 (FVFFAFVVYSCFTIAVGWVVY) traverse the membrane as a helical segment. Asparagine 327 and asparagine 379 each carry an N-linked (GlcNAc...) asparagine glycan. Residue cysteine 466 participates in heme binding. Asparagine 508 is a glycosylation site (N-linked (GlcNAc...) asparagine).

Belongs to the cytochrome P450 family. It depends on heme as a cofactor.

It is found in the membrane. The protein operates within secondary metabolite biosynthesis. In terms of biological role, cytochrome P450 monooxygenase; part of the gene cluster that mediates the biosynthesis of aspyridones. The polyketide-amino acid backbone preaspyridone A is first assembled by the PKS-NRPS hybrid apdA. The assembly of preaspyridone A is initiated by loading of malonyl-CoA onto apdA, followed by decarboxylation to yield the acetyl starter unit. The growing polyketide chain then elongates into a tetraketide. The adpA PKS module catalyzes three Claisen condensations, as well as beta-keto processing and methylation. Alpha-methylation step during polyketide synthesis is a prerequisite and a key checkpoint for chain transfer between PKS and NRPS modules. The downstream NRPS module contains the condensation (C), adenylation (A), and thiolation (T) domains and catalyzes the incorporation of tyrosine via the formation of the L-tyrosinyl-thioester and the amide linkage between L-tyrosinyl-thioester and the tetraketide. The bimodular assembly line is terminated with a reductase (R) domain that facilitates formation and release of the tetramic acid product. Because apdA lacks a designated enoylreductase (ER) domain, the required activity is provided the enoyl reductase apdC. ApdC appears to operate with different stereoselectivity in different PKS cycle. Combined with apdC, apdA is proposed to synthesize preaspyridone A via about 20 enzymatic steps. A number of oxidative steps performed successively by the cytochrome P450 monooxygenases apdE and apdB are required for the conversion of preaspyridone A to aspyridone A. The cytochrome P450 monooxygenase apdE is responsible for the oxidative dephenylation of preaspyridone A. Finally, the predicted FAD-dependent monooxygenase apdD and the acyl-CoA dehydrogenase apdG may be involved in the transformation of aspyridone A into aspyridone B. The chain is Cytochrome P450 monooxygenase apdE from Emericella nidulans (strain FGSC A4 / ATCC 38163 / CBS 112.46 / NRRL 194 / M139) (Aspergillus nidulans).